A 262-amino-acid chain; its full sequence is Hydroxyethylthiazole kinase (262 aa).

Substrate is bound at residue methionine 44. Positions 118 and 166 each coordinate ATP. Glycine 193 is a substrate binding site.

This sequence belongs to the Thz kinase family. Requires Mg(2+) as cofactor.

The enzyme catalyses 5-(2-hydroxyethyl)-4-methylthiazole + ATP = 4-methyl-5-(2-phosphooxyethyl)-thiazole + ADP + H(+). It participates in cofactor biosynthesis; thiamine diphosphate biosynthesis; 4-methyl-5-(2-phosphoethyl)-thiazole from 5-(2-hydroxyethyl)-4-methylthiazole: step 1/1. In terms of biological role, catalyzes the phosphorylation of the hydroxyl group of 4-methyl-5-beta-hydroxyethylthiazole (THZ). This chain is Hydroxyethylthiazole kinase, found in Chlamydia abortus (strain DSM 27085 / S26/3) (Chlamydophila abortus).